We begin with the raw amino-acid sequence, 156 residues long: Ribosomal RNA large subunit methyltransferase H (156 aa).

S-adenosyl-L-methionine contacts are provided by residues leucine 73, glycine 104, and 123-128 (LSPLTL).

The protein belongs to the RNA methyltransferase RlmH family. In terms of assembly, homodimer.

It is found in the cytoplasm. It catalyses the reaction pseudouridine(1915) in 23S rRNA + S-adenosyl-L-methionine = N(3)-methylpseudouridine(1915) in 23S rRNA + S-adenosyl-L-homocysteine + H(+). In terms of biological role, specifically methylates the pseudouridine at position 1915 (m3Psi1915) in 23S rRNA. The protein is Ribosomal RNA large subunit methyltransferase H of Sodalis glossinidius (strain morsitans).